We begin with the raw amino-acid sequence, 638 residues long: DNA gyrase subunit B (638 aa).

The region spanning 431–545 (RELFIVEGNS…YGFVYIAQPP (115 aa)) is the Toprim domain. The Mg(2+) site is built by Glu-437, Asp-510, and Asp-512.

Belongs to the type II topoisomerase GyrB family. As to quaternary structure, heterotetramer, composed of two GyrA and two GyrB chains. In the heterotetramer, GyrA contains the active site tyrosine that forms a transient covalent intermediate with DNA, while GyrB binds cofactors and catalyzes ATP hydrolysis. It depends on Mg(2+) as a cofactor. Mn(2+) is required as a cofactor. Requires Ca(2+) as cofactor.

The protein resides in the cytoplasm. It carries out the reaction ATP-dependent breakage, passage and rejoining of double-stranded DNA.. Functionally, a type II topoisomerase that negatively supercoils closed circular double-stranded (ds) DNA in an ATP-dependent manner to modulate DNA topology and maintain chromosomes in an underwound state. Negative supercoiling favors strand separation, and DNA replication, transcription, recombination and repair, all of which involve strand separation. Also able to catalyze the interconversion of other topological isomers of dsDNA rings, including catenanes and knotted rings. Type II topoisomerases break and join 2 DNA strands simultaneously in an ATP-dependent manner. This is DNA gyrase subunit B from Metamycoplasma arthritidis (Mycoplasma arthritidis).